A 98-amino-acid polypeptide reads, in one-letter code: MPSTFFNLTMAFSLSLLGTLMFRSHLMSTLLCLEGMVLSLFIMTSVTSLNSNSMSSMPIPITILVFAACEAAVGLALLVKVSNTYGTDYVQNLNLLQC.

A run of 3 helical transmembrane segments spans residues 2-22 (PSTF…TLMF), 26-46 (LMST…MTSV), and 58-79 (PIPI…ALLV).

The protein belongs to the complex I subunit 4L family. Core subunit of respiratory chain NADH dehydrogenase (Complex I) which is composed of 45 different subunits.

Its subcellular location is the mitochondrion inner membrane. The catalysed reaction is a ubiquinone + NADH + 5 H(+)(in) = a ubiquinol + NAD(+) + 4 H(+)(out). Its function is as follows. Core subunit of the mitochondrial membrane respiratory chain NADH dehydrogenase (Complex I) which catalyzes electron transfer from NADH through the respiratory chain, using ubiquinone as an electron acceptor. Part of the enzyme membrane arm which is embedded in the lipid bilayer and involved in proton translocation. This chain is NADH-ubiquinone oxidoreductase chain 4L, found in Mus musculus (Mouse).